The primary structure comprises 339 residues: Glyoxylate reductase (339 aa).

NADP(+) contacts are provided by residues 157–160 (LGRI) and 239–241 (TAR). Catalysis depends on residues Arg-241 and Glu-270. The active-site Proton donor is His-289. NADP(+) is bound at residue 289 to 291 (HIA).

It belongs to the D-isomer specific 2-hydroxyacid dehydrogenase family. GyaR subfamily. In terms of assembly, homodimer.

The protein resides in the cytoplasm. The enzyme catalyses glycolate + NAD(+) = glyoxylate + NADH + H(+). This chain is Glyoxylate reductase, found in Thermofilum pendens (strain DSM 2475 / Hrk 5).